A 77-amino-acid chain; its full sequence is Vacuolar ATPase assembly integral membrane protein VMA21 (77 aa).

The Cytoplasmic portion of the chain corresponds to 1 to 8 (MAVDVPTS). The helical transmembrane segment at 9-29 (VIVKLMFFTLAMVSFPVLTFF) threads the bilayer. Residues 30-41 (VSQQYTSNTLVN) are Lumenal-facing. Residues 42–62 (GGLAALAANVVLFAYVIMAFS) traverse the membrane as a helical segment. Residues 63 to 77 (EDVPQSDGKESKKQQ) are Cytoplasmic-facing. Residues 74–77 (KKQQ) carry the Prevents secretion from ER motif.

The protein belongs to the VMA21 family.

Its subcellular location is the endoplasmic reticulum membrane. The protein resides in the endoplasmic reticulum-Golgi intermediate compartment membrane. It localises to the cytoplasmic vesicle. The protein localises to the COPII-coated vesicle membrane. Required for the assembly of the V0 complex of the vacuolar ATPase (V-ATPase) in the endoplasmic reticulum. This chain is Vacuolar ATPase assembly integral membrane protein VMA21, found in Eremothecium gossypii (strain ATCC 10895 / CBS 109.51 / FGSC 9923 / NRRL Y-1056) (Yeast).